Here is a 518-residue protein sequence, read N- to C-terminus: Membrane-bound lytic murein transglycosylase F (518 aa).

The N-terminal stretch at 1-21 (MKKLKINYLFIGILALLLAVA) is a signal peptide. The tract at residues 22 to 269 (LWPSIPWFGK…RIEEKYLGHG (248 aa)) is non-LT domain. Residues 270-518 (DDFDYVDTRT…SRKGSEEKQN (249 aa)) form an LT domain region. E314 is an active-site residue.

In the N-terminal section; belongs to the bacterial solute-binding protein 3 family. The protein in the C-terminal section; belongs to the transglycosylase Slt family.

The protein resides in the cell outer membrane. It catalyses the reaction Exolytic cleavage of the (1-&gt;4)-beta-glycosidic linkage between N-acetylmuramic acid (MurNAc) and N-acetylglucosamine (GlcNAc) residues in peptidoglycan, from either the reducing or the non-reducing ends of the peptidoglycan chains, with concomitant formation of a 1,6-anhydrobond in the MurNAc residue.. Murein-degrading enzyme that degrades murein glycan strands and insoluble, high-molecular weight murein sacculi, with the concomitant formation of a 1,6-anhydromuramoyl product. Lytic transglycosylases (LTs) play an integral role in the metabolism of the peptidoglycan (PG) sacculus. Their lytic action creates space within the PG sacculus to allow for its expansion as well as for the insertion of various structures such as secretion systems and flagella. This chain is Membrane-bound lytic murein transglycosylase F, found in Escherichia coli (strain ATCC 8739 / DSM 1576 / NBRC 3972 / NCIMB 8545 / WDCM 00012 / Crooks).